Reading from the N-terminus, the 46-residue chain is Protein PsbN (46 aa).

Residues 10–30 traverse the membrane as a helical segment; sequence VAIAVLAALLGLTGFGVYTAF.

Belongs to the PsbN family.

The protein resides in the cellular thylakoid membrane. Functionally, may play a role in photosystem I and II biogenesis. This chain is Protein PsbN, found in Synechococcus sp. (strain CC9311).